The following is a 136-amino-acid chain: Organic hydroperoxide resistance protein OhrB (136 aa).

The protein belongs to the OsmC/Ohr family.

Functionally, involved in organic hydroperoxide resistance. In Bacillus subtilis (strain 168), this protein is Organic hydroperoxide resistance protein OhrB (ohrB).